The sequence spans 282 residues: Pantothenate synthetase (282 aa).

An ATP-binding site is contributed by Met-30–His-37. Catalysis depends on His-37, which acts as the Proton donor. Gln-60 serves as a coordination point for (R)-pantoate. Gln-60 is a beta-alanine binding site. Gly-146–Asp-149 is an ATP binding site. Gln-152 is a (R)-pantoate binding site. ATP contacts are provided by residues Ile-175 and Lys-183–Arg-186.

Belongs to the pantothenate synthetase family. As to quaternary structure, homodimer.

The protein localises to the cytoplasm. It catalyses the reaction (R)-pantoate + beta-alanine + ATP = (R)-pantothenate + AMP + diphosphate + H(+). Its pathway is cofactor biosynthesis; (R)-pantothenate biosynthesis; (R)-pantothenate from (R)-pantoate and beta-alanine: step 1/1. Its function is as follows. Catalyzes the condensation of pantoate with beta-alanine in an ATP-dependent reaction via a pantoyl-adenylate intermediate. In Campylobacter jejuni subsp. jejuni serotype O:6 (strain 81116 / NCTC 11828), this protein is Pantothenate synthetase.